We begin with the raw amino-acid sequence, 265 residues long: Orphan methyltransferase M.BamHII (265 aa).

It belongs to the N(4)/N(6)-methyltransferase family. N(4) subfamily.

It carries out the reaction a 2'-deoxycytidine in DNA + S-adenosyl-L-methionine = an N(4)-methyl-2'-deoxycytidine in DNA + S-adenosyl-L-homocysteine + H(+). In terms of biological role, a beta subtype methylase, recognizes the double-stranded sequence 5'-GGATCC-3', methylates C-? on both strands. No endonuclease has been identified for this methylase, although it is speculated it might protect against BamHI. This is Orphan methyltransferase M.BamHII (bamHIIM) from Bacillus amyloliquefaciens (Bacillus velezensis).